The chain runs to 207 residues: Large ribosomal subunit protein uL18 (207 aa).

It belongs to the universal ribosomal protein uL18 family. Part of the 50S ribosomal subunit. Contacts the 5S and 23S rRNAs.

Its function is as follows. This is one of the proteins that bind and probably mediate the attachment of the 5S RNA into the large ribosomal subunit, where it forms part of the central protuberance. The sequence is that of Large ribosomal subunit protein uL18 from Caldivirga maquilingensis (strain ATCC 700844 / DSM 13496 / JCM 10307 / IC-167).